We begin with the raw amino-acid sequence, 196 residues long: Pyridoxal 5'-phosphate synthase subunit PdxT (196 aa).

52–54 (GES) contributes to the L-glutamine binding site. The active-site Nucleophile is C84. L-glutamine contacts are provided by residues R113 and 141–142 (IR). Active-site charge relay system residues include H178 and E180.

This sequence belongs to the glutaminase PdxT/SNO family. In terms of assembly, in the presence of PdxS, forms a dodecamer of heterodimers. Only shows activity in the heterodimer.

It carries out the reaction aldehydo-D-ribose 5-phosphate + D-glyceraldehyde 3-phosphate + L-glutamine = pyridoxal 5'-phosphate + L-glutamate + phosphate + 3 H2O + H(+). The catalysed reaction is L-glutamine + H2O = L-glutamate + NH4(+). It participates in cofactor biosynthesis; pyridoxal 5'-phosphate biosynthesis. In terms of biological role, catalyzes the hydrolysis of glutamine to glutamate and ammonia as part of the biosynthesis of pyridoxal 5'-phosphate. The resulting ammonia molecule is channeled to the active site of PdxS. The polypeptide is Pyridoxal 5'-phosphate synthase subunit PdxT (Pyrococcus horikoshii (strain ATCC 700860 / DSM 12428 / JCM 9974 / NBRC 100139 / OT-3)).